A 458-amino-acid polypeptide reads, in one-letter code: tRNA modification GTPase MnmE (458 aa).

(6S)-5-formyl-5,6,7,8-tetrahydrofolate-binding residues include R26, E88, and R127. The 155-residue stretch at 224–378 folds into the TrmE-type G domain; it reads GLSTAIIGRP…IEERINDIFF (155 aa). Residue N234 participates in K(+) binding. GTP-binding positions include 234-239, 253-259, and 278-281; these read NVGKSS, TDIEGTT, and DTAG. Position 238 (S238) interacts with Mg(2+). 3 residues coordinate K(+): T253, I255, and T258. A Mg(2+)-binding site is contributed by T259. K458 contributes to the (6S)-5-formyl-5,6,7,8-tetrahydrofolate binding site.

It belongs to the TRAFAC class TrmE-Era-EngA-EngB-Septin-like GTPase superfamily. TrmE GTPase family. Homodimer. Heterotetramer of two MnmE and two MnmG subunits. K(+) serves as cofactor.

The protein resides in the cytoplasm. Functionally, exhibits a very high intrinsic GTPase hydrolysis rate. Involved in the addition of a carboxymethylaminomethyl (cmnm) group at the wobble position (U34) of certain tRNAs, forming tRNA-cmnm(5)s(2)U34. The sequence is that of tRNA modification GTPase MnmE from Streptococcus agalactiae serotype Ia (strain ATCC 27591 / A909 / CDC SS700).